A 41-amino-acid polypeptide reads, in one-letter code: Cytochrome b559 subunit beta (41 aa).

A helical membrane pass occupies residues 16 to 32 (WLAIHALAVPTVFFLGS). Position 20 (His-20) interacts with heme.

It belongs to the PsbE/PsbF family. As to quaternary structure, heterodimer of an alpha subunit and a beta subunit. PSII is composed of 1 copy each of membrane proteins PsbA, PsbB, PsbC, PsbD, PsbE, PsbF, PsbH, PsbI, PsbJ, PsbK, PsbL, PsbM, PsbT, PsbX, PsbY, PsbZ, Psb30/Ycf12, at least 3 peripheral proteins of the oxygen-evolving complex and a large number of cofactors. It forms dimeric complexes. The cofactor is heme b.

It is found in the plastid. The protein localises to the chloroplast thylakoid membrane. In terms of biological role, this b-type cytochrome is tightly associated with the reaction center of photosystem II (PSII). PSII is a light-driven water:plastoquinone oxidoreductase that uses light energy to abstract electrons from H(2)O, generating O(2) and a proton gradient subsequently used for ATP formation. It consists of a core antenna complex that captures photons, and an electron transfer chain that converts photonic excitation into a charge separation. The polypeptide is Cytochrome b559 subunit beta (Oltmannsiellopsis viridis (Marine flagellate)).